A 385-amino-acid polypeptide reads, in one-letter code: Glucose-fructose oxidoreductase domain-containing protein 2 (385 aa).

An N-terminal signal peptide occupies residues 1–25 (MKMLPGVGVFGTGSSARVLVPLLRA).

It belongs to the Gfo/Idh/MocA family.

It localises to the secreted. Its subcellular location is the extracellular space. It is found in the extracellular matrix. In terms of biological role, promotes matrix assembly. The chain is Glucose-fructose oxidoreductase domain-containing protein 2 (GFOD2) from Bos taurus (Bovine).